Reading from the N-terminus, the 454-residue chain is tRNA modification GTPase MnmE (454 aa).

The (6S)-5-formyl-5,6,7,8-tetrahydrofolate site is built by Arg23, Glu80, and Lys120. Residues 216-377 (GMKVVIAGRP…LRDHLKQSMG (162 aa)) form the TrmE-type G domain. Asn226 lines the K(+) pocket. GTP-binding positions include 226 to 231 (NAGKSS), 245 to 251 (TDIAGTT), 270 to 273 (DTAG), 335 to 338 (NKAD), and 358 to 360 (SAR). Residue Ser230 coordinates Mg(2+). 3 residues coordinate K(+): Thr245, Ile247, and Thr250. Position 251 (Thr251) interacts with Mg(2+). Position 454 (Lys454) interacts with (6S)-5-formyl-5,6,7,8-tetrahydrofolate.

The protein belongs to the TRAFAC class TrmE-Era-EngA-EngB-Septin-like GTPase superfamily. TrmE GTPase family. Homodimer. Heterotetramer of two MnmE and two MnmG subunits. K(+) serves as cofactor.

It localises to the cytoplasm. Functionally, exhibits a very high intrinsic GTPase hydrolysis rate. Involved in the addition of a carboxymethylaminomethyl (cmnm) group at the wobble position (U34) of certain tRNAs, forming tRNA-cmnm(5)s(2)U34. This chain is tRNA modification GTPase MnmE, found in Yersinia pseudotuberculosis serotype O:3 (strain YPIII).